A 535-amino-acid chain; its full sequence is Flavin-containing monooxygenase 1 (535 aa).

The residue at position 2 (A2) is an N-acetylalanine. Residues 2–513 lie on the Lumenal side of the membrane; sequence AKRVAIVGAG…TRIVQESSSP (512 aa). FAD is bound by residues 9-13, E32, 40-41, and 61-62; these read GAGVS, LW, and NS. NADP(+)-binding positions include 60-61 and 195-198; these read SN and SGTD. The helical transmembrane segment at 514–534 threads the bilayer; that stretch reads FESLLKLFAVLALLVSVFLIF. Position 535 (L535) is a topological domain, cytoplasmic.

Belongs to the FMO family. The cofactor is FAD. Liver.

It is found in the endoplasmic reticulum membrane. The enzyme catalyses hypotaurine + NADPH + O2 + H(+) = taurine + NADP(+) + H2O. It catalyses the reaction hypotaurine + NADH + O2 + H(+) = taurine + NAD(+) + H2O. It carries out the reaction trimethylamine + NADPH + O2 = trimethylamine N-oxide + NADP(+) + H2O. The catalysed reaction is N,N-dimethylaniline + NADPH + O2 + H(+) = N,N-dimethylaniline N-oxide + NADP(+) + H2O. In terms of biological role, broad spectrum monooxygenase that catalyzes the oxygenation of a wide variety of nitrogen- and sulfur-containing compounds including xenobiotics. Catalyzes the S-oxygenation of hypotaurine to produce taurine, an organic osmolyte involved in cell volume regulation as well as a variety of cytoprotective and developmental processes. In vitro, catalyzes the N-oxygenation of trimethylamine (TMA) to produce trimethylamine N-oxide (TMAO) and could therefore participate to the detoxification of this compound that is generated by the action of gut microbiota from dietary precursors such as choline, choline containing compounds, betaine or L-carnitine. The sequence is that of Flavin-containing monooxygenase 1 (FMO1) from Oryctolagus cuniculus (Rabbit).